The following is a 60-amino-acid chain: Putative per-hexamer repeat protein 1 (60 aa).

The polypeptide is Putative per-hexamer repeat protein 1 (Phxr1) (Mus musculus (Mouse)).